A 209-amino-acid chain; its full sequence is Dehydration-responsive element-binding protein 1F (209 aa).

Positions 14-26 match the Nuclear localization signal motif; it reads KKRAGRRVFKETR. Residues 29–86 constitute a DNA-binding region (AP2/ERF); it reads VYRGIRRRNGDKWVCEVREPTHQRRIWLGTYPTADMAARAHDVAVLALRGRSACLNFA. The tract at residues 137-157 is disordered; that stretch reads FGSGSGSGSGSEERNSSSYGF.

The protein belongs to the AP2/ERF transcription factor family. ERF subfamily.

It is found in the nucleus. In terms of biological role, transcriptional activator that binds specifically to the DNA sequence 5'-[AG]CCGAC-3'. Binding to the C-repeat/DRE element mediates cold or dehydration-inducible transcription. CBF/DREB1 factors play a key role in freezing tolerance and cold acclimation. This chain is Dehydration-responsive element-binding protein 1F (DREB1F), found in Arabidopsis thaliana (Mouse-ear cress).